The following is a 416-amino-acid chain: Solute carrier family 25 member 46 (416 aa).

Basic and acidic residues predominate over residues 1–13 (MQPRRPDRFDGLE). The disordered stretch occupies residues 1–91 (MQPRRPDRFD…GEESSSSSSG (91 aa)). The span at 37 to 49 (SFSSSGDLSQHWV) shows a compositional bias: polar residues. Low complexity predominate over residues 82–91 (GEESSSSSSG). One copy of the Solcar 1 repeat lies at 94–185 (HLNRFAGFGI…GMLSEFTHLP (92 aa)). 6 helical membrane-spanning segments follow: residues 101 to 121 (FGIGLASLFTENVLAHPCIVL), 161 to 181 (MGSTFIVQGISLGAEGMLSEF), 197 to 217 (IGGHLLLKGLVYVIVTPFYSA), 256 to 276 (LLPLLVLTFPTVLHGILHYII), 312 to 332 (FPELIANFAASLCADVLLYPL), and 381 to 401 (LGFYKGFGAVVVQYTLHAIVL). One copy of the Solcar 2 repeat lies at 309–414 (EDYFPELIAN…KIIYSSVVQT (106 aa)).

It belongs to the mitochondrial carrier (TC 2.A.29) family.

It localises to the mitochondrion outer membrane. In terms of biological role, may play a role in mitochondrial dynamics by controlling mitochondrial membrane fission. In Xenopus tropicalis (Western clawed frog), this protein is Solute carrier family 25 member 46 (slc25a46).